The primary structure comprises 157 residues: SsrA-binding protein (157 aa).

The disordered stretch occupies residues 132–157; the sequence is VHDKRQAQKDKDWAREKDRLFKKAYK. Residues 135-157 show a composition bias toward basic and acidic residues; that stretch reads KRQAQKDKDWAREKDRLFKKAYK.

The protein belongs to the SmpB family.

The protein localises to the cytoplasm. Functionally, required for rescue of stalled ribosomes mediated by trans-translation. Binds to transfer-messenger RNA (tmRNA), required for stable association of tmRNA with ribosomes. tmRNA and SmpB together mimic tRNA shape, replacing the anticodon stem-loop with SmpB. tmRNA is encoded by the ssrA gene; the 2 termini fold to resemble tRNA(Ala) and it encodes a 'tag peptide', a short internal open reading frame. During trans-translation Ala-aminoacylated tmRNA acts like a tRNA, entering the A-site of stalled ribosomes, displacing the stalled mRNA. The ribosome then switches to translate the ORF on the tmRNA; the nascent peptide is terminated with the 'tag peptide' encoded by the tmRNA and targeted for degradation. The ribosome is freed to recommence translation, which seems to be the essential function of trans-translation. The polypeptide is SsrA-binding protein (Francisella tularensis subsp. novicida (strain U112)).